A 631-amino-acid chain; its full sequence is MSLHVLNDENVPNEKSSQCRDFQFLPPELTGRSSVLCLSQKENVPPQSQAKATNVTFQTPPRDPQTHRILSPNMTNKREAPFGLQNDHCVFLQKENQRPLAPVDDAPVVQMAAEILRAEGELQEGILTSSSLSASTSLLDSELVTPPIEPVLEPSHQGLEPVLESELVTPPVEPVLEPSHQELEPVLESELVTPPIEPVLEPSHQGLEPVLDSELVTPPIEPVLEPSHQGLEPVLESELVTPPIEPVLEPSHQGLEPVLDSELVTPPIEPVLEPSHQGLEPVLDSELVTPPIEPLLEPSHQGLEPVVDLKEESFRDPSEVLGTGAEVDYLEQFGTSSFKESAWRKQSLYVKFDPLLKDSPLRPMPVAPITNSTQDTEEESGSGKPTEAELVNLDFLGDLDVPVSAPTPVWSLEPRGLLPAEPIVDVLKYSQKDLDAVVNVMQQENLELKSKYEDLNTKYLEMGKSVDEFEKIAYKSLEEAEKQRELKEIAEDKIQKVLKERDQLNADLNSMEKSFSDLFKRFEKRKEVIEGYQKNEESLKKYVGECIVKIEKEGQRYQALKIHAEEKLRLANEEIAQVHSKAQAEVLALQASLRKAQMQNHSLEMTLEQKTKEIDELTRICDDLISKMEKI.

N-acetylserine is present on serine 2. Position 39 is a phosphoserine (serine 39). Polar residues predominate over residues 42–59; sequence ENVPPQSQAKATNVTFQT. A disordered region spans residues 42-70; the sequence is ENVPPQSQAKATNVTFQTPPRDPQTHRIL. Position 71 is a phosphoserine (serine 71). 2 necessary but not sufficient for spindle localization regions span residues 311 to 366 and 384 to 631; these read EESF…PMPV and KPTE…MEKI. At serine 347 the chain carries Phosphoserine; by AURKA. Residues 363–385 form a disordered region; sequence PMPVAPITNSTQDTEEESGSGKP. Residues 431–630 are a coiled coil; the sequence is QKDLDAVVNV…CDDLISKMEK (200 aa).

Belongs to the TACC family. As to quaternary structure, interacts with GCN5L2 and PCAF. The coiled coil C-terminal region interacts with AH receptor nuclear translocator protein (ARNT) and ARNT2. Interacts with CCDC100/CEP120. Interacts with CKAP5 independently of clathrin. Interacts with CKAP5 and clathrin forming the TACC3/ch-TOG/clathrin complex located at spindle inter-microtubules bridges; TACC3 (phosphorylated at Ser-347 by AURKA) and CLTC are proposed to form a composite microtubule interaction surface. Embryonically expressed.

It localises to the cytoplasm. Its subcellular location is the cytoskeleton. The protein localises to the microtubule organizing center. The protein resides in the centrosome. It is found in the spindle pole. Functionally, plays a role in the microtubule-dependent coupling of the nucleus and the centrosome. Involved in the processes that regulate centrosome-mediated interkinetic nuclear migration (INM) of neural progenitors. Acts as a component of the TACC3/ch-TOG/clathrin complex proposed to contribute to stabilization of kinetochore fibers of the mitotic spindle by acting as inter-microtubule bridge. The TACC3/ch-TOG/clathrin complex is required for the maintenance of kinetochore fiber tension. May be involved in the control of cell growth and differentiation. May have a role in embryonic development. The protein is Transforming acidic coiled-coil-containing protein 3 (Tacc3) of Mus musculus (Mouse).